Reading from the N-terminus, the 160-residue chain is Major strawberry allergen Fra a 1.08 (160 aa).

It belongs to the BetVI family. Post-translationally, phosphorylated in vivo. Phosphorylation prevents its activity as ribonuclease. In terms of tissue distribution, highly expressed in roots. Expressed a low levels in ripe red fruits.

Possesses ribonuclease activity in vitro. The protein is Major strawberry allergen Fra a 1.08 of Fragaria ananassa (Strawberry).